A 236-amino-acid chain; its full sequence is Peroxisomal membrane protein 11D (236 aa).

G2 bears the N-acetylglycine mark. The Cytoplasmic portion of the chain corresponds to 2-92 (GTTLDVSRAE…LPLVLLGKSK (91 aa)). Residues 93-109 (NALLSTFLFLDQIVWLG) form a helical membrane-spanning segment. Residues 110-207 (RSGIYKNKER…LLQLAPTKIT (98 aa)) lie on the Lumenal side of the membrane. A helical membrane pass occupies residues 208–227 (PRVTGAFGFITSIISCYQLL). The Cytoplasmic segment spans residues 228–236 (PTRPKIKTP).

Belongs to the peroxin-11 family. Homooligomer. Interacts with ARC5 and FIS1B on peroxisomes. In terms of tissue distribution, expressed in developing siliques.

It localises to the peroxisome membrane. In terms of biological role, involved in peroxisomal proliferation. Promotes peroxisomal duplication, aggregation or elongation without fission. The protein is Peroxisomal membrane protein 11D (PEX11D) of Arabidopsis thaliana (Mouse-ear cress).